Consider the following 1031-residue polypeptide: Semaphorin-6A (1031 aa).

The first 18 residues, 1-18 (MRPAALLLCLTLLHCAGA), serve as a signal peptide directing secretion. Topologically, residues 19–649 (GFPEDSEPIS…KSNDQLVPVT (631 aa)) are extracellular. Residues 24 to 512 (SEPISISHGN…FSTCVIKVPL (489 aa)) enclose the Sema domain. Residues Asn-33, Asn-49, and Asn-65 are each glycosylated (N-linked (GlcNAc...) asparagine). 4 cysteine pairs are disulfide-bonded: Cys-107–Cys-117, Cys-135–Cys-144, Cys-258–Cys-369, and Cys-283–Cys-328. A glycan (N-linked (GlcNAc...) asparagine) is linked at Asn-282. N-linked (GlcNAc...) asparagine glycans are attached at residues Asn-434 and Asn-461. Disulfide bonds link Cys-477–Cys-506, Cys-515–Cys-533, Cys-521–Cys-568, and Cys-525–Cys-542. A helical membrane pass occupies residues 650-670 (LLAIAVILAFVMGAVFSGIIV). At 671–1031 (YCVCDHRRKD…TSMKPNDACT (361 aa)) the chain is on the cytoplasmic side. Position 698 is a phosphoserine (Ser-698). 3 disordered regions span residues 754 to 777 (ALPT…SREW), 861 to 902 (SSKS…TGLS), and 914 to 1031 (GLEY…DACT). Over residues 921 to 931 (YPTNSLTRSHQ) the composition is skewed to polar residues. The span at 932-951 (TTTLKRNNTNSSNSSHLSRN) shows a compositional bias: low complexity. At Ser-953 the chain carries Phosphoserine. Composition is skewed to polar residues over residues 971 to 998 (QVHS…SLTR) and 1019 to 1031 (PLST…DACT).

It belongs to the semaphorin family. In terms of assembly, active as a homodimer or oligomer. The SEMA6A homodimer interacts with a PLXNA2 homodimer, giving rise to a heterotetramer. Interacts with EVL. As to expression, particularly high levels in spinal cord, cerebellum, metencephalon, superior and inferior colliculus, diencephalon, olfactory bulb and eye.

Its subcellular location is the cell membrane. Cell surface receptor for PLXNA2 that plays an important role in cell-cell signaling. Required for normal granule cell migration in the developing cerebellum. Promotes reorganization of the actin cytoskeleton and plays an important role in axon guidance in the developing central nervous system. Can act as repulsive axon guidance cue. Has repulsive action towards migrating granular neurons. May play a role in channeling sympathetic axons into the sympathetic chains and controlling the temporal sequence of sympathetic target innervation. This chain is Semaphorin-6A (Sema6a), found in Mus musculus (Mouse).